Reading from the N-terminus, the 182-residue chain is Ribosome hibernation promotion factor (182 aa).

It belongs to the HPF/YfiA ribosome-associated protein family. Long HPF subfamily. In terms of assembly, interacts with 100S ribosomes.

It is found in the cytoplasm. Required for dimerization of active 70S ribosomes into 100S ribosomes in stationary phase; 100S ribosomes are translationally inactive and sometimes present during exponential growth. The protein is Ribosome hibernation promotion factor of Streptococcus pyogenes serotype M6 (strain ATCC BAA-946 / MGAS10394).